We begin with the raw amino-acid sequence, 155 residues long: MKTYSAKPSEIEKKWWVIDAKNIVLGRLASRVAIMLRGKHKPSFTPHLDCGDNIIIINAEHIKLTGKKLNHKDGKVYYRHTGFPGGIKDTTAGKILSGKYPERVIKMAVKRMITRNVLGAKQMSNLYVYANCEHPHMAQQPTVYDFASKNPKNKK.

Belongs to the universal ribosomal protein uL13 family. As to quaternary structure, part of the 50S ribosomal subunit.

This protein is one of the early assembly proteins of the 50S ribosomal subunit, although it is not seen to bind rRNA by itself. It is important during the early stages of 50S assembly. The polypeptide is Large ribosomal subunit protein uL13 (Rickettsia typhi (strain ATCC VR-144 / Wilmington)).